A 254-amino-acid polypeptide reads, in one-letter code: UPF0328 protein ECU01_0070/ECU01_1540/ECU02_1570/ECU04_0080/ECU08_2100 (254 aa).

This sequence belongs to the UPF0328 family.

This is UPF0328 protein ECU01_0070/ECU01_1540/ECU02_1570/ECU04_0080/ECU08_2100 from Encephalitozoon cuniculi (strain GB-M1) (Microsporidian parasite).